Here is a 622-residue protein sequence, read N- to C-terminus: Palmitoyltransferase ZDHHC17 (622 aa).

Residues 1–294 (MADGPDEYDT…LKADKEFRQK (294 aa)) lie on the Cytoplasmic side of the membrane. The necessary and sufficient for interaction with DNAJC5 and SNAP25 stretch occupies residues 1–295 (MADGPDEYDT…KADKEFRQKV (295 aa)). ANK repeat units lie at residues 41 to 76 (THVD…VRQP), 79 to 108 (ENVT…IVDQ), 113 to 142 (LNST…DPSL), 146 to 175 (EGCS…DVDM), 179 to 209 (NGMT…SVNL), 214 to 243 (HKNT…NVDA), and 247 to 276 (KGES…AKGY). Transmembrane regions (helical) follow at residues 295–315 (VMLG…DLNI) and 316–336 (DSWL…QFLS). Topologically, residues 337–347 (KSFFDHSMHSA) are lumenal. Residues 348–368 (LPLGIYLATKFWMYVTWFFWF) traverse the membrane as a helical segment. Topologically, residues 369-371 (WND) are cytoplasmic. Residues 372-392 (LSFLSIHLPFLANSVALFYNF) form a helical membrane-spanning segment. The Lumenal portion of the chain corresponds to 393-470 (GKSWKSDPGI…GNCVGAGNHR (78 aa)). The region spanning 427–477 (IFCSTCLIRKPVRSKHCGVCNRCIAKFDHHCPWVGNCVGAGNHRYFMGYLF) is the DHHC domain. The active-site S-palmitoyl cysteine intermediate is the Cys457. Residues 471–491 (YFMGYLFFLLFMICWMIYGCV) form a helical membrane-spanning segment. The Cytoplasmic segment spans residues 492-506 (SYWGLHCETTYTKDG). Residues 507 to 526 (FWTYITQIATCSPWMFWMFL) form a helical membrane-spanning segment. The Lumenal portion of the chain corresponds to 527–529 (NSV). Residues 530-552 (FHFMWVAVLLMCQMYQITCLGIT) form a helical membrane-spanning segment. At 553 to 622 (TNERMNARRY…QISGSGYQLV (70 aa)) the chain is on the cytoplasmic side.

The protein belongs to the DHHC palmitoyltransferase family. AKR/ZDHHC17 subfamily. As to quaternary structure, interacts (via ANK repeats) with numerous proteins (via the consensus sequence motif [VIAP]-[VIT]-x-x-Q-P). Interacts (via ANK repeats) with CLIP3. Interacts (via ANK repeats) with HTT. Interacts (via ANK repeats) with DNAJC5 (via C-terminus). Interacts (via ANK repeats) with MAP6. Interacts (via ANK repeats) with SNAP23. Interacts (via ANK repeats) with SNAP25. Interacts (via ANK repeats) with EVL. Interacts with SPRED1 and SPRED3. Interacts with GPM6A and OPTN. May interact (via ANK repeats) with SPRED2. May interact with NTRK1; may regulate its localization and function. Autopalmitoylated. Autopalmitoylation has a regulatory role in ZDHHC17-mediated Mg(2+) transport.

The protein resides in the golgi apparatus membrane. Its subcellular location is the cytoplasmic vesicle membrane. It localises to the presynaptic cell membrane. The catalysed reaction is L-cysteinyl-[protein] + hexadecanoyl-CoA = S-hexadecanoyl-L-cysteinyl-[protein] + CoA. It carries out the reaction L-cysteinyl-[protein] + tetradecanoyl-CoA = S-tetradecanoyl-L-cysteinyl-[protein] + CoA. It catalyses the reaction L-cysteinyl-[protein] + octadecanoyl-CoA = S-octadecanoyl-L-cysteinyl-[protein] + CoA. Functionally, palmitoyltransferase that catalyzes the addition of palmitate onto various protein substrates and is involved in a variety of cellular processes. Has no stringent fatty acid selectivity and in addition to palmitate can also transfer onto target proteins myristate from tetradecanoyl-CoA and stearate from octadecanoyl-CoA. Palmitoyltransferase specific for a subset of neuronal proteins, including SNAP25, DLG4/PSD95, GAD2, SYT1 and HTT. Also palmitoylates neuronal protein GPM6A as well as SPRED1 and SPRED3. Could also play a role in axonogenesis through the regulation of NTRK1 and the downstream ERK1/ERK2 signaling cascade. May be involved in the sorting or targeting of critical proteins involved in the initiating events of endocytosis at the plasma membrane. May play a role in Mg(2+) transport. Could also palmitoylate DNAJC5 and regulate its localization to the Golgi membrane. Palmitoylates CASP6, thereby preventing its dimerization and subsequent activation. This chain is Palmitoyltransferase ZDHHC17, found in Rattus norvegicus (Rat).